A 226-amino-acid polypeptide reads, in one-letter code: uncharacterized protein (226 aa).

Positions 121-163 form a coiled coil; it reads TVDELIKTIEKELNKVKKSRKNREKKTNEVEEIIEELIEEDDI.

This is an uncharacterized protein from Methanocaldococcus jannaschii (strain ATCC 43067 / DSM 2661 / JAL-1 / JCM 10045 / NBRC 100440) (Methanococcus jannaschii).